Consider the following 119-residue polypeptide: Beta-2-microglobulin (119 aa).

Positions 1-20 (MARFVVVALLVLLSVSDLEA) are cleaved as a signal peptide. The 90-residue stretch at 25 to 114 (PKIQVYSRYP…VTFLTPKTVK (90 aa)) folds into the Ig-like C1-type domain. Cys45 and Cys100 are oxidised to a cystine.

The protein belongs to the beta-2-microglobulin family. In terms of assembly, heterodimer of an alpha chain and a beta chain. Beta-2-microglobulin is the beta-chain of major histocompatibility complex class I molecules.

Its subcellular location is the secreted. Its function is as follows. Component of the class I major histocompatibility complex (MHC). Involved in the presentation of peptide antigens to the immune system. This is Beta-2-microglobulin (B2M) from Leontocebus fuscicollis (Brown-mantled tamarin).